Reading from the N-terminus, the 149-residue chain is Transcriptional regulator MraZ (149 aa).

SpoVT-AbrB domains are found at residues 5-52 (ITTL…PLPE) and 81-124 (AEEC…DSMV).

Belongs to the MraZ family. Forms oligomers.

It is found in the cytoplasm. The protein localises to the nucleoid. This is Transcriptional regulator MraZ from Nitrosococcus oceani (strain ATCC 19707 / BCRC 17464 / JCM 30415 / NCIMB 11848 / C-107).